Consider the following 451-residue polypeptide: 23S rRNA (uracil(1939)-C(5))-methyltransferase RlmD (451 aa).

The disordered stretch occupies residues Met-1–Ile-21. The TRAM domain maps to Gln-20–Arg-78. Residues Cys-91, Cys-97, Cys-100, and Cys-179 each contribute to the [4Fe-4S] cluster site. Residues Gln-283, Phe-312, Asn-317, Glu-333, Asp-360, and Asp-381 each coordinate S-adenosyl-L-methionine. Cys-407 acts as the Nucleophile in catalysis.

The protein belongs to the class I-like SAM-binding methyltransferase superfamily. RNA M5U methyltransferase family. RlmD subfamily.

The catalysed reaction is uridine(1939) in 23S rRNA + S-adenosyl-L-methionine = 5-methyluridine(1939) in 23S rRNA + S-adenosyl-L-homocysteine + H(+). In terms of biological role, catalyzes the formation of 5-methyl-uridine at position 1939 (m5U1939) in 23S rRNA. This is 23S rRNA (uracil(1939)-C(5))-methyltransferase RlmD from Pseudomonas syringae pv. tomato (strain ATCC BAA-871 / DC3000).